Consider the following 634-residue polypeptide: Probable potassium transport system protein Kup (634 aa).

The next 12 membrane-spanning stretches (helical) occupy residues 21 to 41 (IILSAIGVVFGDIGTSPLYTL), 58 to 78 (VLGILSLIFWAMMLVVTIKYV), 110 to 130 (IYIVGILGIFGTSLFFGDGII), 148 to 168 (PHMKAFVVPITLAVLILLFLC), 180 to 200 (FGPITFLWFIAIGVVGVYNII), 217 to 237 (FFLEHGWHSMFVLGAVVLAVT), 258 to 278 (WMYVVLPMLALNYLGQGALVL), 296 to 316 (GLYPMIALATAAAVIASQALI), 348 to 368 (IYVPTVNWTLLMLVILTVIGF), 377 to 397 (AYGVAVTGTMMITTVLMIIYA), 408 to 428 (LLMIAIVFIAVDGAFFYANII), and 432 to 452 (DGAWFPLLLGVVIFTFMRTWL).

The protein belongs to the HAK/KUP transporter (TC 2.A.72) family.

Its subcellular location is the cell inner membrane. It catalyses the reaction K(+)(in) + H(+)(in) = K(+)(out) + H(+)(out). Transport of potassium into the cell. Likely operates as a K(+):H(+) symporter. The sequence is that of Probable potassium transport system protein Kup from Xylella fastidiosa (strain Temecula1 / ATCC 700964).